A 185-amino-acid polypeptide reads, in one-letter code: Meiotically up-regulated gene 5 protein (185 aa).

Its subcellular location is the cytoplasm. Required for correct meiotic chromosome segregation. The chain is Meiotically up-regulated gene 5 protein (mug5) from Schizosaccharomyces pombe (strain 972 / ATCC 24843) (Fission yeast).